Consider the following 358-residue polypeptide: G-protein coupled receptor 62 (358 aa).

Topologically, residues 1–17 (MANGSGLSVTELAGSVG) are extracellular. A glycan (N-linked (GlcNAc...) asparagine) is linked at Asn3. A helical membrane pass occupies residues 18-38 (FILAVLVEVGAVLGNGTLLVV). Over 39–53 (VLRTPDLQDAFYLAH) the chain is Cytoplasmic. Residues 54–74 (LCVVDLLAAASIMPLGLLAAP) form a helical membrane-spanning segment. At 75–89 (PGLGTVPLDPSSCRA) the chain is on the extracellular side. Residues 90 to 110 (ARFLSAALLPACTLGVAALGL) traverse the membrane as a helical segment. Topologically, residues 111-128 (ARYRLIVHPLRPGARPAP) are cytoplasmic. The chain crosses the membrane as a helical span at residues 129–149 (ALVLTAVWSAAALLGALSLLG). Over 150 to 176 (PPPAPPPAPARCSVLAGGLGPFRPLWA) the chain is Extracellular. Residues 177-197 (MLAFALPALLLLAAYGSIFLV) traverse the membrane as a helical segment. Over 198 to 234 (ARRAALRPPRGTRPRSDSLDSRLSFLPPLRPRLLGGK) the chain is Cytoplasmic. A helical transmembrane segment spans residues 235-255 (AALAPALAVGQFAACWLPYGC). Residues 256 to 268 (ACLAPAARAAAAE) lie on the Extracellular side of the membrane. Residues 269-289 (ATVTWVAYSAFAAHPFLYGLL) form a helical membrane-spanning segment. Topologically, residues 290–358 (QRPVRLALGR…RQTPSVSEAT (69 aa)) are cytoplasmic. The tract at residues 334 to 358 (VLGPSEAPEQARELARQTPSVSEAT) is disordered.

It belongs to the G-protein coupled receptor 1 family. In terms of assembly, homodimer. Forms heterodimer with MTNR1B. Interacts with ARRB1 and ARRB2 in a spontaneous and agonist-independent manner; leading to the internalization of GPR62 in the endosomal compartment. As to expression, expressed in the brain and testes. Expressed widely, in the brain, including the cerebral cortex, cerebellum, hippocampus,thalamus and pituitary gland. In the testes, expressed specifically in the germ cells.

The protein resides in the cell membrane. Its subcellular location is the endosome membrane. Functionally, orphan G-protein coupled receptor. Constitutively activates the G(q/11)/inositol phosphate and the G(s)-alpha/cAMP signaling pathways. Has spontaneous activity for beta-arrestin recruitment. Shows a reciprocal regulatory interaction with the melatonin receptor MTNR1B most likely through receptor heteromerization. The polypeptide is G-protein coupled receptor 62 (Gpr62) (Mus musculus (Mouse)).